We begin with the raw amino-acid sequence, 385 residues long: MTEGVEGRSQERSDLAGFAARSAESRGRKYQEAFRDHRPAFERDRDRIIHCAAFRRLEYKTQVFVNHEGDYYRTRLTHSLEVAQIGKAIARRLGVNEELTEALALAHDLGHTPFGHTGEEVLNRLMEGFGGFEHNLQSFRVVDQLEERYPGFNGLNLSWEVLEGIVKHSSPYDRPVGVIDRFLPGVVPTIEAQIINYADEIAYNNHDIDDGLKSGFITLDQLDGVELWREVHEGIARAYPDIDPERRKLQTISALIGVFIKDLTTTSLENVQRLRITSLDDLRRINRPVVAFSPATAEKNRKLKGFLFENLYRHYRVERMRVKAERYLRQLFESYVKHPTLLPRKYQKKMEILGRERVVCDYIAGMTDRFALDEFKRLFEPYERV.

The segment covering 1-14 (MTEGVEGRSQERSD) has biased composition (basic and acidic residues). Residues 1 to 23 (MTEGVEGRSQERSDLAGFAARSA) are disordered. Positions 75–204 (RLTHSLEVAQ…INYADEIAYN (130 aa)) constitute an HD domain.

The protein belongs to the dGTPase family. Type 2 subfamily.

The sequence is that of Deoxyguanosinetriphosphate triphosphohydrolase-like protein from Geobacter metallireducens (strain ATCC 53774 / DSM 7210 / GS-15).